Here is a 632-residue protein sequence, read N- to C-terminus: Golgin subfamily A member 8J (632 aa).

The segment at 1–76 is disordered; the sequence is MAEETQHNKL…TSSATLKDLE (76 aa). Coiled-coil stretches lie at residues 86-154 and 220-421; these read LDSR…HMKR and LKVQ…SLMA. 2 stretches are compositionally biased toward basic and acidic residues: residues 352–362 and 427–440; these read KQEERIQEQHK and HGGE…EEAP. Disordered regions lie at residues 352–377, 423–452, and 496–524; these read KQEE…FKEP, PGEG…DPES, and LSEP…DEGE. A compositionally biased stretch (gly residues) spans 508–520; the sequence is LGGGHHQAGAQGG.

The protein belongs to the GOLGA8 family.

This is Golgin subfamily A member 8J (GOLGA8J) from Homo sapiens (Human).